Here is a 515-residue protein sequence, read N- to C-terminus: Glucose-6-phosphate 1-dehydrogenase X (515 aa).

Ala-2 carries the post-translational modification N-acetylalanine. Residues 38–45, Arg-72, Tyr-147, and Lys-171 each bind NADP(+); that span reads GASGDLAK. D-glucose 6-phosphate contacts are provided by residues Lys-171, 201 to 205, Glu-239, and Asp-258; that span reads HYLGK. His-263 acts as the Proton acceptor in catalysis. An NADP(+)-binding site is contributed by Arg-357. Residues Lys-360 and Arg-365 each coordinate D-glucose 6-phosphate. NADP(+) contacts are provided by Lys-366, Arg-370, and Arg-393. Gln-395 contributes to the D-glucose 6-phosphate binding site. NADP(+) is bound by residues 401–403, 421–423, Arg-487, and Tyr-503; these read YTK and DLT. The residue at position 507 (Tyr-507) is a Phosphotyrosine. Trp-509 is an NADP(+) binding site.

Belongs to the glucose-6-phosphate dehydrogenase family. As to quaternary structure, homotetramer; dimer of dimers. Interacts with SIRT2; the interaction is enhanced by H(2)O(2) treatment. Forms a ternary complex with ALDOB and TP53; this interaction is direct. ALDOB stabilizes the complex inhibiting G6PD activity and keeping oxidative pentose phosphate metabolism in check. In terms of processing, acetylated by ELP3 at Lys-403; acetylation inhibits its homodimerization and enzyme activity. Deacetylated by SIRT2 at Lys-403; deacetylation stimulates its enzyme activity.

The protein localises to the cytoplasm. The protein resides in the cytosol. It localises to the membrane. It carries out the reaction D-glucose 6-phosphate + NADP(+) = 6-phospho-D-glucono-1,5-lactone + NADPH + H(+). It functions in the pathway carbohydrate degradation; pentose phosphate pathway; D-ribulose 5-phosphate from D-glucose 6-phosphate (oxidative stage): step 1/3. Catalyzes the rate-limiting step of the oxidative pentose-phosphate pathway, which represents a route for the dissimilation of carbohydrates besides glycolysis. The main function of this enzyme is to provide reducing power (NADPH) and pentose phosphates for fatty acid and nucleic acid synthesis. In Mus musculus (Mouse), this protein is Glucose-6-phosphate 1-dehydrogenase X (G6pdx).